Reading from the N-terminus, the 132-residue chain is Bleomycin resistance protein (132 aa).

One can recognise a VOC domain in the interval 1 to 129 (MLQSIPALPV…DNNLISFFQQ (129 aa)).

The protein belongs to the bleomycin resistance protein family.

Its function is as follows. Binding protein with a strong affinity to the bleomycin family of antibiotics. The protein is Bleomycin resistance protein (bleO) of Geobacillus stearothermophilus (Bacillus stearothermophilus).